The primary structure comprises 114 residues: Putative small ubiquitin-related modifier 4 (114 aa).

Residues 1–20 are disordered; that stretch reads MSTTSRVGSNEVKMEGQKRK. Positions 26–104 constitute a Ubiquitin-like domain; it reads THVTLKVKGQ…IDAMLCQQSG (79 aa). A Glycyl lysine isopeptide (Gly-Lys) (interchain with K-? in acceptor proteins) cross-link involves residue G104.

The protein belongs to the ubiquitin family. SUMO subfamily. Interacts with SAE2, SCE1, SIZ1 and MMS21 Covalently attached to a number of proteins.

It localises to the nucleus. The protein localises to the cytoplasm. Ubiquitin-like protein which can be covalently attached to target lysines as a monomer. Does not seem to be involved in protein degradation and may function as an antagonist of ubiquitin in the degradation process. The chain is Putative small ubiquitin-related modifier 4 (SUMO4) from Arabidopsis thaliana (Mouse-ear cress).